A 469-amino-acid chain; its full sequence is 3-isopropylmalate dehydratase large subunit (469 aa).

Residues Cys347, Cys407, and Cys410 each coordinate [4Fe-4S] cluster.

This sequence belongs to the aconitase/IPM isomerase family. LeuC type 1 subfamily. In terms of assembly, heterodimer of LeuC and LeuD. Requires [4Fe-4S] cluster as cofactor.

The enzyme catalyses (2R,3S)-3-isopropylmalate = (2S)-2-isopropylmalate. It participates in amino-acid biosynthesis; L-leucine biosynthesis; L-leucine from 3-methyl-2-oxobutanoate: step 2/4. In terms of biological role, catalyzes the isomerization between 2-isopropylmalate and 3-isopropylmalate, via the formation of 2-isopropylmaleate. The polypeptide is 3-isopropylmalate dehydratase large subunit (Prochlorococcus marinus (strain NATL1A)).